Reading from the N-terminus, the 285-residue chain is Aquaporin PIP2-5 (285 aa).

A run of 2 helical transmembrane segments spans residues 38–58 (AVIAEFVATLLFLYITVATVI) and 75–95 (CGGVGVLGIAWAFGGMIFILV). The NPA 1 motif lies at 107 to 109 (NPA). 3 helical membrane passes run 126–146 (LLYIVAQCLGAICGVGLVKGF), 168–188 (GTGLAAEIIGTFVLVYTVFSA), and 202–222 (VLAPLPIGFAVFMVHLATIPI). Residues 228-230 (NPA) carry the NPA 2 motif. The chain crosses the membrane as a helical span at residues 250–270 (IFWVGPFIGAAIAAAYHQYVL).

This sequence belongs to the MIP/aquaporin (TC 1.A.8) family. PIP (TC 1.A.8.11) subfamily. In terms of assembly, homomers. May interact with PIP1-2 to form heteromers. Specifically expressed in roots, in the exodermis, endodermis and xylem parenchyma. Polar localization to the external periclinal side of epidermal cells in root apices.

The protein localises to the cell membrane. In terms of biological role, water channel required to facilitate the transport of water across cell membrane. Its function is impaired by Hg(2+). May play a role in water uptake from the root surface. Active as homomers. Increased activity when heteromerization with PIP1-2. The protein is Aquaporin PIP2-5 (PIP2-5) of Zea mays (Maize).